We begin with the raw amino-acid sequence, 466 residues long: Soluble pyridine nucleotide transhydrogenase (466 aa).

Residue 36-45 (ERYQNVGGGC) participates in FAD binding.

The protein belongs to the class-I pyridine nucleotide-disulfide oxidoreductase family. The cofactor is FAD.

Its subcellular location is the cytoplasm. It catalyses the reaction NAD(+) + NADPH = NADH + NADP(+). Its function is as follows. Conversion of NADPH, generated by peripheral catabolic pathways, to NADH, which can enter the respiratory chain for energy generation. This Escherichia coli O127:H6 (strain E2348/69 / EPEC) protein is Soluble pyridine nucleotide transhydrogenase.